Here is a 173-residue protein sequence, read N- to C-terminus: ATP synthase subunit b (173 aa).

Residues 19-39 (IVWSLIILVIVAVFFYKFFMP) form a helical membrane-spanning segment.

Belongs to the ATPase B chain family. In terms of assembly, F-type ATPases have 2 components, F(1) - the catalytic core - and F(0) - the membrane proton channel. F(1) has five subunits: alpha(3), beta(3), gamma(1), delta(1), epsilon(1). F(0) has three main subunits: a(1), b(2) and c(10-14). The alpha and beta chains form an alternating ring which encloses part of the gamma chain. F(1) is attached to F(0) by a central stalk formed by the gamma and epsilon chains, while a peripheral stalk is formed by the delta and b chains.

The protein localises to the cell membrane. In terms of biological role, f(1)F(0) ATP synthase produces ATP from ADP in the presence of a proton or sodium gradient. F-type ATPases consist of two structural domains, F(1) containing the extramembraneous catalytic core and F(0) containing the membrane proton channel, linked together by a central stalk and a peripheral stalk. During catalysis, ATP synthesis in the catalytic domain of F(1) is coupled via a rotary mechanism of the central stalk subunits to proton translocation. Its function is as follows. Component of the F(0) channel, it forms part of the peripheral stalk, linking F(1) to F(0). This chain is ATP synthase subunit b, found in Bifidobacterium longum (strain NCC 2705).